The following is a 465-amino-acid chain: Iron-sulfur cluster assembly SufBD family protein SAR0880 (465 aa).

The protein belongs to the iron-sulfur cluster assembly SufBD family.

This chain is Iron-sulfur cluster assembly SufBD family protein SAR0880, found in Staphylococcus aureus (strain MRSA252).